A 354-amino-acid chain; its full sequence is 3-dehydroquinate synthase (354 aa).

NAD(+) contacts are provided by residues 100 to 104, 124 to 125, lysine 136, lysine 145, and 163 to 166; these read GATGD, TT, and FLKT. Residues glutamate 178, histidine 242, and histidine 256 each coordinate Zn(2+).

It belongs to the sugar phosphate cyclases superfamily. Dehydroquinate synthase family. It depends on NAD(+) as a cofactor. Co(2+) serves as cofactor. The cofactor is Zn(2+).

The protein resides in the cytoplasm. The enzyme catalyses 7-phospho-2-dehydro-3-deoxy-D-arabino-heptonate = 3-dehydroquinate + phosphate. It participates in metabolic intermediate biosynthesis; chorismate biosynthesis; chorismate from D-erythrose 4-phosphate and phosphoenolpyruvate: step 2/7. In terms of biological role, catalyzes the conversion of 3-deoxy-D-arabino-heptulosonate 7-phosphate (DAHP) to dehydroquinate (DHQ). This chain is 3-dehydroquinate synthase, found in Staphylococcus aureus (strain Mu50 / ATCC 700699).